The sequence spans 1053 residues: Serine/threonine-protein phosphatase 6 regulatory ankyrin repeat subunit A (1053 aa).

27 ANK repeats span residues 40–69 (EKRTPLHAAAYLGDAEIIELLILSGARVNA), 73–102 (KWLTPLHRAVASCSEEAVQVLLKHSADVNA), 106–135 (NWQTPLHIAAANKAVKCAEALVPLLSNVNV), 139–168 (AGRTALHHAAFSGHGEMVKLLLSRGANINA), 172–201 (KDRRAIHWAAYMGHIEVVKLLVSHGAEVTC), 205–234 (KSYTPLHAAASSGMISVVKYLLDLGVDMNE), 238–267 (YGNTPLHVACYNGQDVVVNELIDCGAIVNQ), 271–301 (KGFTPLHFAAASTHGALCLELLVGNGADVNM), 305–334 (DGKTPLHMTALHGRFSRSQTIIQSGAVIDC), 338–367 (NGNTPLHIAARYGHELLINTLITSGADTAK), 371–400 (HGMFPLHLAALSGFSDCCRKLLSSGFDIDT), 404–433 (FGRTCLHAAAAGGNLECLNLLLNTGADFNK), 437–466 (FGRSPLHYAAANCNYQCLFALVGSGASVND), 470–500 (RGCTPLHYAATSDTDGKCLEYLLRNDANPGI), 504–534 (QGYNAVHYSAAYGHRLCLQLIASETPLDVLM), 549–578 (ATISPLHLAAYHGHHQALEVLVQSLLDLDV), 582–611 (SGRTPLDLAAFKGHVECVDVLINQGASILV), 616–645 (LKRTPIHAAATNGHSECLRLLIGNAEPQNA), 652–681 (NGQTPLMLSVLNGHTDCVYSLLNKGANVDA), 685–714 (WGRTALHRGAVTGHEECVDALLQHGAKCLL), 718–747 (RGRTPIHLSAACGHIGVLGALLQSAASMDA), 755–784 (HGYTALHWACYNGHETCVELLLEQEVFQKT), 787–817 (NAFSPLHCAVINDNEGAAEMLIDTLGASIVN), 822–851 (KGRTPLHAAAFTDHVECLQLLLSHNAQVNS), 855–885 (TGKTPLMMAAENGQTNTVEMLVSSASAELTL), 889–918 (SKNTALHLACSKGHETSALLILEKITDRNL), and 925–954 (ALQTPLHVAARNGLTMVVQELLGKGASVLA). Phosphoserine is present on residues serine 1007 and serine 1011.

As to quaternary structure, protein phosphatase 6 (PP6) holoenzyme is proposed to be a heterotrimeric complex formed by the catalytic subunit, a SAPS domain-containing subunit (PP6R) and an ankyrin repeat-domain containing regulatory subunit (ARS). Interacts with PPP6C, PPP6R1 and PPP6R3. Interacts with PPP1C and HNRPK. Post-translationally, ubiquitinated by the ECS(RAB40C) complex leading to its degradation and decreased PP6 activity.

It localises to the nucleus. The protein localises to the nucleoplasm. Its subcellular location is the cytoplasm. The protein resides in the cytosol. It is found in the cell projection. It localises to the lamellipodium. In terms of biological role, regulatory subunit of protein phosphatase 6 (PP6) that may be involved in the recognition of phosphoprotein substrates. Involved in the PP6-mediated dephosphorylation of NFKBIE opposing its degradation in response to TNF-alpha. Selectively inhibits the phosphatase activity of PPP1C. Targets PPP1C to modulate HNRPK phosphorylation. Involved in the PP6-mediated dephosphorylation of MOB1 and induced focal adhesion assembly during cell migration. The chain is Serine/threonine-protein phosphatase 6 regulatory ankyrin repeat subunit A from Homo sapiens (Human).